The sequence spans 309 residues: Acetolactate synthase small subunit, mitochondrial (309 aa).

The N-terminal 24 residues, 1-24 (MLRSLLQSGHRRVVASSCATMVRC), are a transit peptide targeting the mitochondrion. The ACT domain maps to 79–159 (VLNCLVQNEP…DYTNSEIIKR (81 aa)).

It belongs to the acetolactate synthase small subunit family. As to quaternary structure, the acetolactate synthase complex contains the catalytic regulatory subunit ILV2 and the regulatory small subunit ILV6.

It is found in the mitochondrion. It functions in the pathway amino-acid biosynthesis; L-isoleucine biosynthesis; L-isoleucine from 2-oxobutanoate: step 1/4. The protein operates within amino-acid biosynthesis; L-valine biosynthesis; L-valine from pyruvate: step 1/4. Functionally, regulatory subunit of mitochondrial acetolactate synthase, which catalyzes the first of a series of common steps in the biosynthesis of the branched-chain amino acids. Stimulates activity of the acetolactate synthase catalytic subunit ILV2 seven- to tenfold and confers sensitivity to inhibition by valine and activation by ATP. The chain is Acetolactate synthase small subunit, mitochondrial (ILV6) from Saccharomyces cerevisiae (strain ATCC 204508 / S288c) (Baker's yeast).